Reading from the N-terminus, the 353-residue chain is GTPase Obg (353 aa).

One can recognise an Obg domain in the interval 1–159; sequence MKFIDEATIK…FELYLELKVL (159 aa). Positions 160 to 332 constitute an OBG-type G domain; sequence ADVGLLGMPN…LTYAIMEHVE (173 aa). Residues 166–173, 191–195, 213–216, 284–287, and 313–315 each bind GTP; these read GMPNAGKS, FTTLH, DVPG, NKVD, and SAL. Residues Ser-173 and Thr-193 each contribute to the Mg(2+) site.

It belongs to the TRAFAC class OBG-HflX-like GTPase superfamily. OBG GTPase family. As to quaternary structure, monomer. Requires Mg(2+) as cofactor.

Its subcellular location is the cytoplasm. In terms of biological role, an essential GTPase which binds GTP, GDP and possibly (p)ppGpp with moderate affinity, with high nucleotide exchange rates and a fairly low GTP hydrolysis rate. Plays a role in control of the cell cycle, stress response, ribosome biogenesis and in those bacteria that undergo differentiation, in morphogenesis control. The polypeptide is GTPase Obg (Methylobacillus flagellatus (strain ATCC 51484 / DSM 6875 / VKM B-1610 / KT)).